The chain runs to 331 residues: MIDTSIPLVDLHRHLDGNVRVNTIWELGHQHGIALPADSLETLAPFVQIQGKETSLVAFLKKLDWMVAVLADLDAVKRVAYENVADAALSGLDYAELRFSPYYMAMNHKLPIEGVVEAVVDGVKAGLKDYNVKINLIGIMSRSFGQAACTQELEGLLAHKQHLVAMDLAGDELGFPGELFNDHFKRVRDAGLAITAHAGEAAGSQSMWQAIQELGATRIGHGVNAIHDPRLMEYLAKHRIGIESCPTSNLHTSTVVSYAEHPFRTFMDAGVLISLNTDDPGVSAIDIKHEYRIAKSELKLTDAELAQVQRNGVEMAFLSDSERKALYAAKV.

Positions 12 and 14 each coordinate Zn(2+). Histidine 14, aspartate 16, and glycine 170 together coordinate substrate. Residue histidine 197 participates in Zn(2+) binding. The active-site Proton donor is the glutamate 200. Aspartate 278 is a Zn(2+) binding site. Aspartate 279 lines the substrate pocket.

It belongs to the metallo-dependent hydrolases superfamily. Adenosine and AMP deaminases family. Adenosine deaminase subfamily. Requires Zn(2+) as cofactor.

It catalyses the reaction adenosine + H2O + H(+) = inosine + NH4(+). It carries out the reaction 2'-deoxyadenosine + H2O + H(+) = 2'-deoxyinosine + NH4(+). Catalyzes the hydrolytic deamination of adenosine and 2-deoxyadenosine. The polypeptide is Adenosine deaminase (Shewanella sp. (strain W3-18-1)).